The primary structure comprises 220 residues: Putative NAD(P)H nitroreductase SERP2086 (220 aa).

It belongs to the nitroreductase family. Requires FMN as cofactor.

The sequence is that of Putative NAD(P)H nitroreductase SERP2086 from Staphylococcus epidermidis (strain ATCC 35984 / DSM 28319 / BCRC 17069 / CCUG 31568 / BM 3577 / RP62A).